Here is a 443-residue protein sequence, read N- to C-terminus: ATP-dependent protease ATPase subunit HslU (443 aa).

ATP contacts are provided by residues Ile18, 60–65 (GVGKTE), Asp256, Glu321, and Arg393.

Belongs to the ClpX chaperone family. HslU subfamily. As to quaternary structure, a double ring-shaped homohexamer of HslV is capped on each side by a ring-shaped HslU homohexamer. The assembly of the HslU/HslV complex is dependent on binding of ATP.

It localises to the cytoplasm. Its function is as follows. ATPase subunit of a proteasome-like degradation complex; this subunit has chaperone activity. The binding of ATP and its subsequent hydrolysis by HslU are essential for unfolding of protein substrates subsequently hydrolyzed by HslV. HslU recognizes the N-terminal part of its protein substrates and unfolds these before they are guided to HslV for hydrolysis. The polypeptide is ATP-dependent protease ATPase subunit HslU (Nitrosospira multiformis (strain ATCC 25196 / NCIMB 11849 / C 71)).